The sequence spans 554 residues: Putative F-box/LRR-repeat protein 8 (554 aa).

Residues 71–117 (YDYISNLPDECLSLIFQSLTCADLKRCSLVCRRWLTIEGQCRHRLSL) enclose the F-box domain. 12 LRR repeats span residues 119 to 144 (AQSD…VLRS), 148 to 173 (SLGI…KLRG), 174 to 199 (CPEI…SFGS), 205 to 224 (KGMN…SVKR), 250 to 275 (KELH…KIFR), 301 to 325 (RIQM…HLVK), 326 to 351 (TPDC…HIDG), 354 to 379 (TNRI…VLIG), 383 to 404 (TKLS…ALCG), 405 to 428 (SDTV…KLCI), 430 to 455 (NCPI…KVKK), and 456 to 480 (CRGV…NLDA).

The polypeptide is Putative F-box/LRR-repeat protein 8 (FBL8) (Arabidopsis thaliana (Mouse-ear cress)).